Reading from the N-terminus, the 861-residue chain is ToMV resistance protein Tm-2(GCR236) (861 aa).

Residues 63 to 83 (VKNLLKDIQELAGDVEDLLDD) adopt a coiled-coil conformation. The NB-ARC domain occupies 162–388 (DDFNMLQAKL…LESMGHKVQD (227 aa)). 185–192 (GMPGLGKT) is a binding site for ATP. LRR repeat units lie at residues 225–248 (LDIA…NLRS), 305–327 (LHAL…IFNF), 388–411 (DGCA…CFLY), 449–472 (LAED…TYNG), 510–536 (VARL…KLEK), 585–608 (MTCL…IVKL), 609–631 (TRLE…VWES), 652–680 (ISSF…FFEP), 689–710 (LRKL…IFSP), 712–735 (LKAL…LSSY), 736–758 (PHIA…SFPP), 784–810 (LRKL…GYSF), and 811–835 (PQLE…DVSM).

The protein belongs to the disease resistance NB-LRR family. (Microbial infection) Interacts with tobamoviruses mouvement protein at the plasma membrane; this interaction triggers defense responses leading to programmed cell death. In terms of assembly, binds to HSP90 proteins; this interaction seems required for defense responses toward tobamoviruses.

Its subcellular location is the cell membrane. Its function is as follows. Inhibitor of viral mouvements which confers resistance to some tobamoviruses including tomato mosaic virus (ToMV) (e.g. isolates L, W3 and SL-1) and tobacco mosaic virus (TMV), but not to resistance-breaking isolates (e.g. B7, LT1, LII, Ltbl, ToMV2, and ToMV1-2) ToMV and tomato brown rugose fruit virus (ToBRFV). Elicits a hypersensitive reaction in response to avirulent (Avr) movement proteins from resistance inducing tobamoviruses (e.g. ToMV and TMV) strains, thus leading to programmed cell death. This Solanum lycopersicum (Tomato) protein is ToMV resistance protein Tm-2(GCR236).